Consider the following 218-residue polypeptide: Imidazole glycerol phosphate synthase subunit HisH (218 aa).

The Glutamine amidotransferase type-1 domain occupies 7 to 211 (STVIIDTGCA…LALDKASLDA (205 aa)). The active-site Nucleophile is the Cys-82. Residues His-186 and Glu-188 contribute to the active site.

In terms of assembly, heterodimer of HisH and HisF.

The protein localises to the cytoplasm. It catalyses the reaction 5-[(5-phospho-1-deoxy-D-ribulos-1-ylimino)methylamino]-1-(5-phospho-beta-D-ribosyl)imidazole-4-carboxamide + L-glutamine = D-erythro-1-(imidazol-4-yl)glycerol 3-phosphate + 5-amino-1-(5-phospho-beta-D-ribosyl)imidazole-4-carboxamide + L-glutamate + H(+). The catalysed reaction is L-glutamine + H2O = L-glutamate + NH4(+). It functions in the pathway amino-acid biosynthesis; L-histidine biosynthesis; L-histidine from 5-phospho-alpha-D-ribose 1-diphosphate: step 5/9. Functionally, IGPS catalyzes the conversion of PRFAR and glutamine to IGP, AICAR and glutamate. The HisH subunit catalyzes the hydrolysis of glutamine to glutamate and ammonia as part of the synthesis of IGP and AICAR. The resulting ammonia molecule is channeled to the active site of HisF. The protein is Imidazole glycerol phosphate synthase subunit HisH of Shewanella sediminis (strain HAW-EB3).